Reading from the N-terminus, the 305-residue chain is Methionyl-tRNA formyltransferase (305 aa).

Residue 111–114 participates in (6S)-5,6,7,8-tetrahydrofolate binding; the sequence is SILP.

It belongs to the Fmt family.

The catalysed reaction is L-methionyl-tRNA(fMet) + (6R)-10-formyltetrahydrofolate = N-formyl-L-methionyl-tRNA(fMet) + (6S)-5,6,7,8-tetrahydrofolate + H(+). In terms of biological role, attaches a formyl group to the free amino group of methionyl-tRNA(fMet). The formyl group appears to play a dual role in the initiator identity of N-formylmethionyl-tRNA by promoting its recognition by IF2 and preventing the misappropriation of this tRNA by the elongation apparatus. In Wolinella succinogenes (strain ATCC 29543 / DSM 1740 / CCUG 13145 / JCM 31913 / LMG 7466 / NCTC 11488 / FDC 602W) (Vibrio succinogenes), this protein is Methionyl-tRNA formyltransferase.